The primary structure comprises 399 residues: Long-chain primary alcohol dehydrogenase AdhA (399 aa).

It belongs to the iron-containing alcohol dehydrogenase family. As to quaternary structure, homotetramer. It depends on Zn(2+) as a cofactor.

The catalysed reaction is a primary alcohol + NADP(+) = an aldehyde + NADPH + H(+). Functionally, alcohol dehydrogenase active against primary long-chain alcohols. Pentan-1-ol is the optimum substrate in vitro, but also shows efficient dehydrogenase activity on propanol, hexanol, and ethanol. The protein is Long-chain primary alcohol dehydrogenase AdhA (adhA) of Thermoanaerobacter ethanolicus (Clostridium thermohydrosulfuricum).